The chain runs to 418 residues: Flavin-dependent L-tryptophan oxidase VioA (418 aa).

Mg(2+) is bound at residue glycine 13. Serine 15 contributes to the FAD binding site. Position 16 (glycine 16) interacts with Mg(2+). Residues aspartate 38, arginine 46, and arginine 64 each contribute to the FAD site. Substrate-binding residues include arginine 64 and histidine 163. Residue leucine 208 coordinates FAD. Alanine 240 contacts Mg(2+). Tyrosine 309 is a binding site for substrate. Methionine 398 provides a ligand contact to FAD.

The protein belongs to the flavin monoamine oxidase family. As to quaternary structure, homodimer. The cofactor is FAD. It depends on Mg(2+) as a cofactor.

The catalysed reaction is L-tryptophan + O2 = 2-iminio-3-(indol-3-yl)propanoate + H2O2. The enzyme catalyses 7-chloro-L-tryptophan + O2 = 3-(7-chloroindol-3-yl)-2-iminopropanoate + H2O2. Its pathway is pigment biosynthesis; violacein biosynthesis. In terms of biological role, the enzyme generates the imine form of indole 3-pyruvate (IPA) from L-tryptophan (L-Trp), with concomitant two-electron reduction of O(2) to H(2)O(2). In Chromobacterium violaceum (strain ATCC 12472 / DSM 30191 / JCM 1249 / CCUG 213 / NBRC 12614 / NCIMB 9131 / NCTC 9757 / MK), this protein is Flavin-dependent L-tryptophan oxidase VioA (vioA).